Here is a 432-residue protein sequence, read N- to C-terminus: UDP-N-acetylglucosamine 1-carboxyvinyltransferase (432 aa).

22-23 (KN) serves as a coordination point for phosphoenolpyruvate. UDP-N-acetyl-alpha-D-glucosamine is bound at residue Arg-102. Residue Cys-126 is the Proton donor of the active site. Cys-126 bears the 2-(S-cysteinyl)pyruvic acid O-phosphothioketal mark. UDP-N-acetyl-alpha-D-glucosamine-binding positions include 131–135 (RPVDL), Asp-317, and Ile-339.

The protein belongs to the EPSP synthase family. MurA subfamily.

The protein localises to the cytoplasm. It catalyses the reaction phosphoenolpyruvate + UDP-N-acetyl-alpha-D-glucosamine = UDP-N-acetyl-3-O-(1-carboxyvinyl)-alpha-D-glucosamine + phosphate. Its pathway is cell wall biogenesis; peptidoglycan biosynthesis. In terms of biological role, cell wall formation. Adds enolpyruvyl to UDP-N-acetylglucosamine. The polypeptide is UDP-N-acetylglucosamine 1-carboxyvinyltransferase (Rhodospirillum centenum (strain ATCC 51521 / SW)).